A 118-amino-acid chain; its full sequence is Non-specific lipid-transfer protein 3 (118 aa).

Positions 1-25 (MARSMNLACVALVMCMVVIAPMAEA) are cleaved as a signal peptide. 4 disulfides stabilise this stretch: cysteine 29–cysteine 76, cysteine 39–cysteine 53, cysteine 54–cysteine 99, and cysteine 74–cysteine 113.

The protein belongs to the plant LTP family.

In terms of biological role, plant non-specific lipid-transfer proteins transfer phospholipids as well as galactolipids across membranes. May play a role in wax or cutin deposition in the cell walls of expanding epidermal cells and certain secretory tissues. The protein is Non-specific lipid-transfer protein 3 of Lens culinaris (Lentil).